The sequence spans 638 residues: Poly(A)-specific ribonuclease PARN (638 aa).

A divalent metal cation is bound by residues Asp-28 and Glu-30. Positions 143 to 165 (REQYDEKRSQSNGAGALSYTSPN) are disordered. The segment covering 152–165 (QSNGAGALSYTSPN) has biased composition (polar residues). Ser-163 and Ser-167 each carry phosphoserine. The region spanning 178-245 (KKFIDQVVEK…ERYIVISKVD (68 aa)) is the R3H domain. Position 220 is an N6-acetyllysine (Lys-220). Residues Asp-292 and Asp-382 each contribute to the a divalent metal cation site. Residue Lys-499 is modified to N6-acetyllysine. Residue Ser-530 is modified to Phosphoserine. Ser-557 carries the phosphoserine; by MAPKAPK2 modification. The segment at 573–638 (RAEAGLEARA…AKLFEVPDTW (66 aa)) is disordered. A phosphoserine mark is found at Ser-583 and Ser-587. The span at 606 to 615 (KKAKKLKRMK) shows a compositional bias: basic residues. Phosphoserine occurs at positions 619, 623, and 627.

This sequence belongs to the CAF1 family. As to quaternary structure, homodimer. Found in a mRNA decay complex with RENT1, RENT2 and RENT3B. Interacts with KHSRP. Interacts with CELF1/CUGBP1. Interacts with ZC3HAV1 in an RNA-independent manner. Interacts with DHX36. Mg(2+) is required as a cofactor. Phosphorylation by MAPKAPK2, preventing GADD45A mRNA degradation after genotoxic stress.

It is found in the nucleus. It localises to the cytoplasm. The protein resides in the nucleolus. It carries out the reaction Exonucleolytic cleavage of poly(A) to 5'-AMP.. 3'-exoribonuclease that has a preference for poly(A) tails of mRNAs, thereby efficiently degrading poly(A) tails. Exonucleolytic degradation of the poly(A) tail is often the first step in the decay of eukaryotic mRNAs and is also used to silence certain maternal mRNAs translationally during oocyte maturation and early embryonic development. Involved in nonsense-mediated mRNA decay, a critical process of selective degradation of mRNAs that contain premature stop codons. Also involved in degradation of inherently unstable mRNAs that contain AU-rich elements (AREs) in their 3'-UTR, possibly via its interaction with KHSRP. Probably mediates the removal of poly(A) tails of AREs mRNAs, which constitutes the first step of destabilization. Interacts with both the 3'-end poly(A) tail and the 5'-end cap structure during degradation, the interaction with the cap structure being required for an efficient degradation of poly(A) tails. Also able to recognize poly(A) tails of microRNAs such as MIR21 and H/ACA box snoRNAs (small nucleolar RNAs) leading to microRNAs degradation or snoRNA increased stability. The protein is Poly(A)-specific ribonuclease PARN (PARN) of Bos taurus (Bovine).